Consider the following 465-residue polypeptide: Ribulose bisphosphate carboxylase large chain (465 aa).

Lysine 4 carries the post-translational modification N6,N6,N6-trimethyllysine. Substrate is bound by residues asparagine 113 and threonine 163. Lysine 165 serves as the catalytic Proton acceptor. Lysine 167 serves as a coordination point for substrate. Lysine 191, aspartate 193, and glutamate 194 together coordinate Mg(2+). Lysine 191 carries the N6-carboxylysine modification. The active-site Proton acceptor is the histidine 284. Residues arginine 285, histidine 317, and serine 369 each coordinate substrate.

The protein belongs to the RuBisCO large chain family. Type I subfamily. In terms of assembly, heterohexadecamer of 8 large chains and 8 small chains; disulfide-linked. The disulfide link is formed within the large subunit homodimers. Mg(2+) serves as cofactor. Post-translationally, the disulfide bond which can form in the large chain dimeric partners within the hexadecamer appears to be associated with oxidative stress and protein turnover.

It localises to the plastid. The protein resides in the chloroplast. The enzyme catalyses 2 (2R)-3-phosphoglycerate + 2 H(+) = D-ribulose 1,5-bisphosphate + CO2 + H2O. The catalysed reaction is D-ribulose 1,5-bisphosphate + O2 = 2-phosphoglycolate + (2R)-3-phosphoglycerate + 2 H(+). Functionally, ruBisCO catalyzes two reactions: the carboxylation of D-ribulose 1,5-bisphosphate, the primary event in carbon dioxide fixation, as well as the oxidative fragmentation of the pentose substrate in the photorespiration process. Both reactions occur simultaneously and in competition at the same active site. This is Ribulose bisphosphate carboxylase large chain from Cyrilla racemiflora (Swamp titi).